Here is a 169-residue protein sequence, read N- to C-terminus: Peptide deformylase (169 aa).

Positions 91 and 133 each coordinate Fe cation. E134 is an active-site residue. H137 is a Fe cation binding site.

It belongs to the polypeptide deformylase family. The cofactor is Fe(2+).

It catalyses the reaction N-terminal N-formyl-L-methionyl-[peptide] + H2O = N-terminal L-methionyl-[peptide] + formate. Its function is as follows. Removes the formyl group from the N-terminal Met of newly synthesized proteins. Requires at least a dipeptide for an efficient rate of reaction. N-terminal L-methionine is a prerequisite for activity but the enzyme has broad specificity at other positions. In Escherichia coli (strain K12 / DH10B), this protein is Peptide deformylase.